Here is a 57-residue protein sequence, read N- to C-terminus: Protein CgkB (57 aa).

The protein is Protein CgkB (cgkB) of Pseudoalteromonas carrageenovora (Alteromonas carrageenovora).